The following is a 180-amino-acid chain: Centromere protein M (180 aa).

It is found in the nucleus. Its subcellular location is the chromosome. The protein resides in the centromere. In terms of biological role, probable component of a centromeric complex involved in assembly of kinetochore proteins, mitotic progression and chromosome segregation. The chain is Centromere protein M (cenpm) from Xenopus laevis (African clawed frog).